The sequence spans 264 residues: NADH dehydrogenase [ubiquinone] iron-sulfur protein 3, mitochondrial (264 aa).

A mitochondrion-targeting transit peptide spans 1 to 36 (MAAAAVARLWWRGILGASALTRGTGRPSVLLLPVRR).

It belongs to the complex I 30 kDa subunit family. In terms of assembly, core subunit of respiratory chain NADH dehydrogenase (Complex I) which is composed of 45 different subunits. Interacts with NDUFAF3. Interacts with RAB5IF. Found in subcomplexes containing subunits NDUFS2, MT-ND1 and NDUFA13.

It localises to the mitochondrion inner membrane. It catalyses the reaction a ubiquinone + NADH + 5 H(+)(in) = a ubiquinol + NAD(+) + 4 H(+)(out). Its function is as follows. Core subunit of the mitochondrial membrane respiratory chain NADH dehydrogenase (Complex I) which catalyzes electron transfer from NADH through the respiratory chain, using ubiquinone as an electron acceptor. Essential for the catalytic activity and assembly of complex I. This chain is NADH dehydrogenase [ubiquinone] iron-sulfur protein 3, mitochondrial (NDUFS3), found in Pan troglodytes (Chimpanzee).